A 124-amino-acid polypeptide reads, in one-letter code: Fluoride-specific ion channel FluC (124 aa).

A run of 4 helical transmembrane segments spans residues I4–W24, G32–M52, I67–T87, and F96–L116. Na(+) is bound by residues G75 and T78.

Belongs to the fluoride channel Fluc/FEX (TC 1.A.43) family.

Its subcellular location is the cell inner membrane. It carries out the reaction fluoride(in) = fluoride(out). Its activity is regulated as follows. Na(+) is not transported, but it plays an essential structural role and its presence is essential for fluoride channel function. Functionally, fluoride-specific ion channel. Important for reducing fluoride concentration in the cell, thus reducing its toxicity. The sequence is that of Fluoride-specific ion channel FluC from Geobacter metallireducens (strain ATCC 53774 / DSM 7210 / GS-15).